Here is a 301-residue protein sequence, read N- to C-terminus: Ribosomal RNA large subunit methyltransferase F (301 aa).

This sequence belongs to the methyltransferase superfamily. METTL16/RlmF family.

Its subcellular location is the cytoplasm. It catalyses the reaction adenosine(1618) in 23S rRNA + S-adenosyl-L-methionine = N(6)-methyladenosine(1618) in 23S rRNA + S-adenosyl-L-homocysteine + H(+). Specifically methylates the adenine in position 1618 of 23S rRNA. The chain is Ribosomal RNA large subunit methyltransferase F from Colwellia psychrerythraea (strain 34H / ATCC BAA-681) (Vibrio psychroerythus).